The following is a 360-amino-acid chain: G-protein coupled receptor 15 (360 aa).

The Extracellular segment spans residues 1–33; the sequence is MDPEETSVYLDYYYATSPNPDIRETHSHVPYTS. The helical transmembrane segment at 34–54 threads the bilayer; sequence VFLPVFYIAVFLTGVLGNLVL. Topologically, residues 55–69 are cytoplasmic; sequence MGALHFKPGSRRLID. Residues 70 to 90 form a helical membrane-spanning segment; that stretch reads IFIINLAASDFIFLVTLPLWV. Residues 91–120 lie on the Extracellular side of the membrane; that stretch reads DKEASLGLWRTGSFLCKGSSYMISVNMHCS. The chain crosses the membrane as a helical span at residues 121–141; it reads VFLLTCMSVDRYLAIVCPVVS. Residues 142–149 are Cytoplasmic-facing; it reads RKFRRTDC. Residues 150-170 traverse the membrane as a helical segment; sequence AYVVCASIWFISCLLGLPTLL. The Extracellular portion of the chain corresponds to 171–192; sequence SRELTLIDDKPYCAEKKATPLK. A helical membrane pass occupies residues 193-213; the sequence is LIWSLVALIFTFFVPLLSIVT. Over 214–239 the chain is Cytoplasmic; that stretch reads CYCRIARKLCAHYQQSGKHNKKLKKS. Residues 240 to 260 traverse the membrane as a helical segment; sequence IKIIFIVVAAFLVSWLPFNTS. The Extracellular portion of the chain corresponds to 261–284; it reads KLLAIVSGLQQERYFPSAILQLGM. A helical transmembrane segment spans residues 285–305; that stretch reads EVSGPLAFANSCVNPFIYYIF. Over 306-360 the chain is Cytoplasmic; it reads DSYIRRAIVHCLCPCLKNYDFGSSTETSDSHLTKALSTFIHAEDFTRRRKRSVSL. At serine 359 the chain carries Phosphoserine.

It belongs to the G-protein coupled receptor 1 family. As to quaternary structure, interacts with adapter YWHAE; this interaction promotes ER-to-Golgi transport of GPR15. Post-translationally, phosphorylation is necessary for YWHAE binding and efficient surface expression. O-glycosylated. Sialylated O-glycans in the N-terminal tail inhibits binding of GPR15LG. In terms of processing, sulfation is required for efficient binding of GPR15LG.

The protein localises to the cell membrane. In terms of biological role, g protein-coupled receptor that plays an important role in immune homeostasis. Acts via its natural ligand GPR15LG, a chemokine-like polypeptide strongly expressed in gastrointestinal tissues. GPR15-GPR15LG signaling axis regulates intestinal homeostasis and inflammation through the migration of immune cells. Controls thereby the specific homing of T-cells, particularly FOXP3+ regulatory T-cells (Tregs), to the large intestine lamina propria. Also required for skin localization of thymus-derived dendritic epidermal T-cells. Plays an important role in mediating cytoprotective function as well as angiogenesis of thrombomodulin. Mechanistically, preferentially signals through the Gi/o pathway to inhibit adenylate cyclase activity and activate a phosphatidylinositol-calcium second messenger system that regulates the release of Ca(2+) ions from intracellular stores. The polypeptide is G-protein coupled receptor 15 (GPR15) (Chlorocebus aethiops (Green monkey)).